Consider the following 236-residue polypeptide: Leucyl/phenylalanyl-tRNA--protein transferase (236 aa).

This sequence belongs to the L/F-transferase family.

It is found in the cytoplasm. The enzyme catalyses N-terminal L-lysyl-[protein] + L-leucyl-tRNA(Leu) = N-terminal L-leucyl-L-lysyl-[protein] + tRNA(Leu) + H(+). It carries out the reaction N-terminal L-arginyl-[protein] + L-leucyl-tRNA(Leu) = N-terminal L-leucyl-L-arginyl-[protein] + tRNA(Leu) + H(+). It catalyses the reaction L-phenylalanyl-tRNA(Phe) + an N-terminal L-alpha-aminoacyl-[protein] = an N-terminal L-phenylalanyl-L-alpha-aminoacyl-[protein] + tRNA(Phe). Its function is as follows. Functions in the N-end rule pathway of protein degradation where it conjugates Leu, Phe and, less efficiently, Met from aminoacyl-tRNAs to the N-termini of proteins containing an N-terminal arginine or lysine. This is Leucyl/phenylalanyl-tRNA--protein transferase from Shewanella sp. (strain ANA-3).